Reading from the N-terminus, the 453-residue chain is Ribosome biogenesis protein SSF2 (453 aa).

Residues 1-11 show a composition bias toward basic residues; it reads MAKRRQKKRTH. Disordered regions lie at residues 1–22, 275–327, and 373–453; these read MAKR…ERDI, KAKH…KAIK, and AKMR…SEVE. The Brix domain occupies 26–348; sequence MVIRVGQTSL…LVKIEDGICS (323 aa). Over residues 373–398 the composition is skewed to basic and acidic residues; the sequence is AKMRLKEQRRKEQEENIAKKKAVKDA. Over residues 399-409 the composition is skewed to basic residues; sequence KKQRKLERRKA. Residues 440–453 are compositionally biased toward acidic residues; the sequence is VPEDLDSDLFSEVE.

Part of a complex that includes BRX1, RPF1, RPF2 and SSF1 or SSF2.

The protein resides in the nucleus. The protein localises to the nucleolus. In terms of biological role, required for biogenesis of the 60S ribosomal subunit. The sequence is that of Ribosome biogenesis protein SSF2 (SSF2) from Saccharomyces cerevisiae (strain ATCC 204508 / S288c) (Baker's yeast).